A 795-amino-acid chain; its full sequence is MKSAWALALACTLLLAASVTAEEVDVDATVEEDLGKSREGSRTDDEVVQREEEAIQLDGLNASQIKEIREKSEKFAFQAEVNRMMKLIINSLYKNKEIFLRELISNASDALDKIRLISLTDENALAGNEELTVKIKCDKEKNMLHVTDTGIGMTKEELIKNLGTIAKSGTSEFLNKMTEMQDDSQSTSELIGQFGVGFYSAFLVADRVIVTSKHNNDTQHIWESDSNEFSVIDDPRGNTLGRGTTITLVLKEEASDYLELDTVKNLVKKYSQFINFPIYVWSSKTETVEEPVEEEEAKEEKEETDDNEAAVEEEEEEKKPKTKKVEKTVWDWELMNDIKPIWQRPSKEVEEDEYKAFYKTFSKEHDDPMAYIHFTAEGEVTFKSILFVPNSAPRGLFDEYGSKKSDFIKLYVRRVFITDDFHDMMPKYLNFVKGVVDSDDLPLNVSRETLQQHKLLKVIRKKLVRKTLDMIKKIAEEKYNDTFWKEFGTNVKLGVIEDHSNRTRLAKLLRFQSSHHESNLTSLDQYVERMKEKQDKIYFMAGASRKEAESSPFVERLLKKGYEVIYLTEPVDEYCIQALPEFDGKRFQNVAKEGVKFEESEKSKESREALEKEFEPLLNWMKDKALKDKIEKAVLSQRLTQSPCALVASQYGWSGNMERIMKAQAYQTGKDISTNYYASQKKTFEINPRHPLIKDMLRRVKENEDDKTVSDLAVVLFETATLRSGYMLPDTKEYGDRIERMLRLSLNIDLDAKVEEEPEEPEDAAEEAEQDEEEVDADAEDSETQKESTDVKDEL.

The signal sequence occupies residues 1-21 (MKSAWALALACTLLLAASVTA). Residues 41–43 (SRT) carry the SRT pseudosubstrate motif motif. 2 N-linked (GlcNAc...) asparagine glycosylation sites follow: Asn-61 and Asn-106. Residues Asn-106, Asp-148, Asn-161, and Phe-198 each coordinate ATP. N-linked (GlcNAc...) asparagine glycosylation is present at Asn-216. The segment covering 289–316 (EEPVEEEEAKEEKEETDDNEAAVEEEEE) has biased composition (acidic residues). The interval 289–322 (EEPVEEEEAKEEKEETDDNEAAVEEEEEEKKPKT) is disordered. Asn-444, Asn-480, and Asn-501 each carry an N-linked (GlcNAc...) asparagine glycan. Residues 751–795 (DAKVEEEPEEPEDAAEEAEQDEEEVDADAEDSETQKESTDVKDEL) form a disordered region. Residues 756–782 (EEPEEPEDAAEEAEQDEEEVDADAEDS) are compositionally biased toward acidic residues. Basic and acidic residues predominate over residues 783-795 (ETQKESTDVKDEL). The short motif at 792 to 795 (KDEL) is the Prevents secretion from ER element.

This sequence belongs to the heat shock protein 90 family. As to quaternary structure, homodimer; disulfide-linked.

It is found in the endoplasmic reticulum lumen. Its subcellular location is the sarcoplasmic reticulum lumen. It catalyses the reaction ATP + H2O = ADP + phosphate + H(+). Functionally, ATP-dependent chaperone involved in the processing of proteins in the endoplasmic reticulum, regulating their transport. The protein is Endoplasmin (HSP90B1) of Gallus gallus (Chicken).